We begin with the raw amino-acid sequence, 308 residues long: Glutaminase (308 aa).

Substrate contacts are provided by Ser66, Asn117, Glu161, Asn168, Tyr192, Tyr244, and Val262.

The protein belongs to the glutaminase family. As to quaternary structure, homotetramer.

It carries out the reaction L-glutamine + H2O = L-glutamate + NH4(+). The chain is Glutaminase from Salmonella agona (strain SL483).